A 155-amino-acid polypeptide reads, in one-letter code: Transcriptional repressor NrdR (155 aa).

The segment at 3 to 34 (CPFCAANDTKVIDSRLVAEGDQVRRRRECVAC) is a zinc-finger region. The ATP-cone domain maps to 49 to 139 (PRLIKQDGSR…VYRRFQDLNE (91 aa)).

This sequence belongs to the NrdR family. The cofactor is Zn(2+).

Functionally, negatively regulates transcription of bacterial ribonucleotide reductase nrd genes and operons by binding to NrdR-boxes. The chain is Transcriptional repressor NrdR from Ectopseudomonas mendocina (strain ymp) (Pseudomonas mendocina).